Reading from the N-terminus, the 360-residue chain is GTPase Obg (360 aa).

Positions 1–156 constitute an Obg domain; it reads MFVDSVEIII…KCVRLELKLI (156 aa). The OBG-type G domain maps to 157 to 360; that stretch reads ADIGLVGFPN…LKFVLLEALP (204 aa). GTP is bound by residues 163-170, 188-192, 210-213, 279-282, and 341-343; these read GFPNAGKS, FTTLV, DIPG, NKCD, and SAV. Positions 170 and 190 each coordinate Mg(2+).

Belongs to the TRAFAC class OBG-HflX-like GTPase superfamily. OBG GTPase family. Monomer. Requires Mg(2+) as cofactor.

The protein localises to the cytoplasm. An essential GTPase which binds GTP, GDP and possibly (p)ppGpp with moderate affinity, with high nucleotide exchange rates and a fairly low GTP hydrolysis rate. Plays a role in control of the cell cycle, stress response, ribosome biogenesis and in those bacteria that undergo differentiation, in morphogenesis control. This chain is GTPase Obg, found in Helicobacter pylori (strain HPAG1).